A 276-amino-acid chain; its full sequence is Diaminopimelate epimerase (276 aa).

N13, Q46, and N66 together coordinate substrate. C75 acts as the Proton donor in catalysis. Substrate-binding positions include 76 to 77, N159, N192, and 210 to 211; these read GN and ER. C219 functions as the Proton acceptor in the catalytic mechanism. 220-221 is a binding site for substrate; the sequence is GT.

The protein belongs to the diaminopimelate epimerase family. As to quaternary structure, homodimer.

The protein resides in the cytoplasm. The enzyme catalyses (2S,6S)-2,6-diaminopimelate = meso-2,6-diaminopimelate. The protein operates within amino-acid biosynthesis; L-lysine biosynthesis via DAP pathway; DL-2,6-diaminopimelate from LL-2,6-diaminopimelate: step 1/1. Its function is as follows. Catalyzes the stereoinversion of LL-2,6-diaminopimelate (L,L-DAP) to meso-diaminopimelate (meso-DAP), a precursor of L-lysine and an essential component of the bacterial peptidoglycan. The polypeptide is Diaminopimelate epimerase (Aeromonas hydrophila subsp. hydrophila (strain ATCC 7966 / DSM 30187 / BCRC 13018 / CCUG 14551 / JCM 1027 / KCTC 2358 / NCIMB 9240 / NCTC 8049)).